The primary structure comprises 289 residues: Oxaloacetate decarboxylase (289 aa).

Position 50 (serine 50) interacts with substrate. Aspartate 88 lines the Mg(2+) pocket. Substrate is bound by residues arginine 159 and histidine 235.

It belongs to the isocitrate lyase/PEP mutase superfamily. Oxaloacetate decarboxylase family. Homotetramer; dimer of dimers. Mg(2+) serves as cofactor.

The catalysed reaction is oxaloacetate + H(+) = pyruvate + CO2. Functionally, catalyzes the decarboxylation of oxaloacetate into pyruvate. Seems to play a role in maintaining cellular concentrations of bicarbonate and pyruvate. This is Oxaloacetate decarboxylase from Pseudomonas savastanoi pv. phaseolicola (strain 1448A / Race 6) (Pseudomonas syringae pv. phaseolicola (strain 1448A / Race 6)).